Reading from the N-terminus, the 492-residue chain is Glutamyl-tRNA(Gln) amidotransferase subunit A (492 aa).

Residues Lys-78 and Ser-158 each act as charge relay system in the active site. Ser-182 (acyl-ester intermediate) is an active-site residue.

Belongs to the amidase family. GatA subfamily. In terms of assembly, heterotrimer of A, B and C subunits.

It carries out the reaction L-glutamyl-tRNA(Gln) + L-glutamine + ATP + H2O = L-glutaminyl-tRNA(Gln) + L-glutamate + ADP + phosphate + H(+). Functionally, allows the formation of correctly charged Gln-tRNA(Gln) through the transamidation of misacylated Glu-tRNA(Gln) in organisms which lack glutaminyl-tRNA synthetase. The reaction takes place in the presence of glutamine and ATP through an activated gamma-phospho-Glu-tRNA(Gln). This is Glutamyl-tRNA(Gln) amidotransferase subunit A from Parvibaculum lavamentivorans (strain DS-1 / DSM 13023 / NCIMB 13966).